A 505-amino-acid chain; its full sequence is MKNEKRKSGIEPKVFFPLLIIVGILCWLTVRDLDAANVVINAVFSYVTNVWGWAFEWYMVVMLFSWFWLVFGPYAKKRLGDEKPEFSTASWIFMMFASCTSAAVLFWGSIEIYYYISTPPFGLEPNSTGAKEIGLAYSLFHWGPLPWATYSFLSVAFAYFFFVRKMDVIRPSSTLVPLVGEKHAKGLFSTIVDNFYLVALIFAMGTSLGLATPLVTECMQWLFGIPHTLQLDAIIITCWIILNAICVACGLQKGVRIASDVRSYLSFLMLGWVFIVSGASFIMNYFTDSVGMLLMHLPRMLFYTDAIGKGGFPQGWTVFYWAWWVIYAIQMSIFLARISRGRTVRELCFGMVMGLTASTWILWTVLGSNTLLLMDKNILNIPQLIEQHGVARAIIETWAALPLSTATMWGFFILCFIATVTLINACSYTLAMSTCREVRDGEEPPLLVRIGWSVLVGIIGIVLLALGGLKPIQTAIIAGGCPLFFVNIMVTLSFIKDAKVHWKDK.

12 helical membrane-spanning segments follow: residues 10–30 (IEPK…WLTV), 51–71 (WGWA…WLVF), 92–112 (IFMM…SIEI), 143–163 (GPLP…FFFV), 195–215 (FYLV…TPLV), 231–251 (LDAI…ACGL), 263–283 (SYLS…SFIM), 316–336 (WTVF…IFLA), 347–367 (LCFG…TVLG), 403–423 (LSTA…VTLI), 446–466 (LLVR…LLAL), and 475–495 (AIIA…LSFI).

This sequence belongs to the BCCT transporter (TC 2.A.15) family. CaiT subfamily. As to quaternary structure, homotrimer.

It is found in the cell inner membrane. The catalysed reaction is 4-(trimethylamino)butanoate(in) + (R)-carnitine(out) = 4-(trimethylamino)butanoate(out) + (R)-carnitine(in). Its pathway is amine and polyamine metabolism; carnitine metabolism. Catalyzes the exchange of L-carnitine for gamma-butyrobetaine. This Salmonella typhi protein is L-carnitine/gamma-butyrobetaine antiporter.